The following is a 185-amino-acid chain: Peptide deformylase 2 (185 aa).

2 residues coordinate Fe cation: C108 and H150. The active site involves E151. Fe cation is bound at residue H154.

The protein belongs to the polypeptide deformylase family. It depends on Fe(2+) as a cofactor.

It catalyses the reaction N-terminal N-formyl-L-methionyl-[peptide] + H2O = N-terminal L-methionyl-[peptide] + formate. Its function is as follows. Removes the formyl group from the N-terminal Met of newly synthesized proteins. Requires at least a dipeptide for an efficient rate of reaction. N-terminal L-methionine is a prerequisite for activity but the enzyme has broad specificity at other positions. The chain is Peptide deformylase 2 from Nitrosomonas europaea (strain ATCC 19718 / CIP 103999 / KCTC 2705 / NBRC 14298).